The sequence spans 285 residues: uncharacterized protein (285 aa).

Residues 197–217 traverse the membrane as a helical segment; it reads PTIGALLSLVSAFFSFIPFLM.

It localises to the membrane. This is an uncharacterized protein from Saccharomyces cerevisiae (strain ATCC 204508 / S288c) (Baker's yeast).